Reading from the N-terminus, the 1070-residue chain is DNA-directed RNA polymerase subunit beta (1070 aa).

This sequence belongs to the RNA polymerase beta chain family. In plastids the minimal PEP RNA polymerase catalytic core is composed of four subunits: alpha, beta, beta', and beta''. When a (nuclear-encoded) sigma factor is associated with the core the holoenzyme is formed, which can initiate transcription.

It is found in the plastid. Its subcellular location is the chloroplast. It catalyses the reaction RNA(n) + a ribonucleoside 5'-triphosphate = RNA(n+1) + diphosphate. Its function is as follows. DNA-dependent RNA polymerase catalyzes the transcription of DNA into RNA using the four ribonucleoside triphosphates as substrates. The polypeptide is DNA-directed RNA polymerase subunit beta (Phaseolus vulgaris (Kidney bean)).